We begin with the raw amino-acid sequence, 237 residues long: Uridylate kinase (237 aa).

12–15 (KLSG) is a binding site for ATP. The tract at residues 20–25 (GEDGLG) is involved in allosteric activation by GTP. Gly54 is a UMP binding site. ATP is bound by residues Gly55 and Arg59. UMP is bound by residues Asp74 and 135–142 (TGNPFFTT). ATP contacts are provided by Thr162, Tyr168, and Asp171.

This sequence belongs to the UMP kinase family. As to quaternary structure, homohexamer.

The protein localises to the cytoplasm. The enzyme catalyses UMP + ATP = UDP + ADP. Its pathway is pyrimidine metabolism; CTP biosynthesis via de novo pathway; UDP from UMP (UMPK route): step 1/1. With respect to regulation, allosterically activated by GTP. Inhibited by UTP. Its function is as follows. Catalyzes the reversible phosphorylation of UMP to UDP. The sequence is that of Uridylate kinase from Haemophilus influenzae (strain PittGG).